The following is a 476-amino-acid chain: Ribulose bisphosphate carboxylase large chain (476 aa).

Substrate is bound by residues Asn124 and Thr174. Lys176 (proton acceptor) is an active-site residue. Residue Lys178 coordinates substrate. Mg(2+) is bound by residues Lys202, Asp204, and Glu205. The residue at position 202 (Lys202) is an N6-carboxylysine. The active-site Proton acceptor is His295. Positions 296, 328, and 380 each coordinate substrate.

Belongs to the RuBisCO large chain family. Type I subfamily. Heterohexadecamer of 8 large chains and 8 small chains; disulfide-linked. The disulfide link is formed within the large subunit homodimers. Forms complexes of many stoichiometries with Raf1 with and without RbcS. RuBisCO interacts with the C-terminus of CcmM. Mg(2+) serves as cofactor. Post-translationally, the disulfide bond which can form in the large chain dimeric partners within the hexadecamer appears to be associated with oxidative stress and protein turnover.

The protein localises to the carboxysome. The catalysed reaction is 2 (2R)-3-phosphoglycerate + 2 H(+) = D-ribulose 1,5-bisphosphate + CO2 + H2O. It carries out the reaction D-ribulose 1,5-bisphosphate + O2 = 2-phosphoglycolate + (2R)-3-phosphoglycerate + 2 H(+). RuBisCO catalyzes two reactions: the carboxylation of D-ribulose 1,5-bisphosphate, the primary event in carbon dioxide fixation, as well as the oxidative fragmentation of the pentose substrate in the photorespiration process. Both reactions occur simultaneously and in competition at the same active site. In Nostoc sp. (strain PCC 7120 / SAG 25.82 / UTEX 2576), this protein is Ribulose bisphosphate carboxylase large chain.